Here is a 542-residue protein sequence, read N- to C-terminus: Chaperonin GroEL (542 aa).

Residues 29 to 32 (TMGP), Lys-50, 86 to 90 (DGTTT), Gly-414, 477 to 479 (NAA), and Asp-493 contribute to the ATP site.

Belongs to the chaperonin (HSP60) family. As to quaternary structure, forms a cylinder of 14 subunits composed of two heptameric rings stacked back-to-back. Interacts with the co-chaperonin GroES.

Its subcellular location is the cytoplasm. It carries out the reaction ATP + H2O + a folded polypeptide = ADP + phosphate + an unfolded polypeptide.. Together with its co-chaperonin GroES, plays an essential role in assisting protein folding. The GroEL-GroES system forms a nano-cage that allows encapsulation of the non-native substrate proteins and provides a physical environment optimized to promote and accelerate protein folding. In Sulfurovum sp. (strain NBC37-1), this protein is Chaperonin GroEL.